A 507-amino-acid chain; its full sequence is Probable Xaa-Pro aminopeptidase HCBG_01484 (507 aa).

4 residues coordinate Mn(2+): aspartate 283, aspartate 294, glutamate 431, and glutamate 469.

It belongs to the peptidase M24B family. Requires Mn(2+) as cofactor.

It carries out the reaction Release of any N-terminal amino acid, including proline, that is linked to proline, even from a dipeptide or tripeptide.. Catalyzes the removal of a penultimate prolyl residue from the N-termini of peptides. In Ajellomyces capsulatus (strain G186AR / H82 / ATCC MYA-2454 / RMSCC 2432) (Darling's disease fungus), this protein is Probable Xaa-Pro aminopeptidase HCBG_01484.